A 717-amino-acid polypeptide reads, in one-letter code: Cell division cycle protein 27 homolog A (717 aa).

Positions 198 to 208 (TEHIPGENQQD) are enriched in polar residues. Disordered stretches follow at residues 198-217 (TEHIPGENQQDLKIMQQPGD), 282-315 (LSAEAQEESGRRRSARIAARKKNPMSQSFGKDSH), and 342-374 (SKEATTSGQSVSDIGSSVDDEEKSNPSESSPDR). Residues 293–304 (RRSARIAARKKN) show a composition bias toward basic residues. Residues 342–356 (SKEATTSGQSVSDIG) are compositionally biased toward polar residues. 7 TPR repeats span residues 421–454 (HWVLMQVGKAYFELQDYFNADSSFTLAHQKYPYA), 489–522 (PESWCAVGNCYSLRKDHDTALKMFQRAIQLNERF), 524–556 (YAHTLCGHEFAALEEFEDAERCYRKALGIDTRH), 557–590 (YNAWYGLGMTYLRQEKFEFAQHQFQLALQINPRS), 592–624 (VIMCYYGIALHESKRNDEALMMMEKAVLTDAKN), 625–658 (PLPKYYKAHILTSLGDYHKAQKVLEELKECAPQE), and 659–692 (SSVHASLGKIYNQLKQYDKAVLHFGIALDLSPSP).

The protein belongs to the APC3/CDC27 family. In terms of assembly, the APC/C is composed of at least 10 subunits. Interacts with APC2 and APC10.

Its subcellular location is the nucleus. It functions in the pathway protein modification; protein ubiquitination. In terms of biological role, component of the anaphase promoting complex/cyclosome (APC/C), a cell cycle-regulated E3 ubiquitin-protein ligase complex that controls progression through mitosis and the G1 phase of the cell cycle. The APC/C complex controls several key steps in the cell cycle by mediating ubiquitination and subsequent degradation of target proteins such as cyclins. The APC/C complex is required for the female gametophyte development and is involved in several aspect of development by controlling cell division and cell elongation. Involved in the control of endoreduplication. Functionally redundant with CDC27B in the control of gametophyte development. The sequence is that of Cell division cycle protein 27 homolog A (CDC27A) from Arabidopsis thaliana (Mouse-ear cress).